Consider the following 223-residue polypeptide: Ribose-5-phosphate isomerase A (223 aa).

Substrate-binding positions include 29-32, 82-85, and 95-98; these read TGST, DGAD, and KGGG. The active-site Proton acceptor is the Glu-104. Lys-122 contributes to the substrate binding site.

Belongs to the ribose 5-phosphate isomerase family. As to quaternary structure, homodimer.

It carries out the reaction aldehydo-D-ribose 5-phosphate = D-ribulose 5-phosphate. It functions in the pathway carbohydrate degradation; pentose phosphate pathway; D-ribose 5-phosphate from D-ribulose 5-phosphate (non-oxidative stage): step 1/1. Its function is as follows. Catalyzes the reversible conversion of ribose-5-phosphate to ribulose 5-phosphate. The polypeptide is Ribose-5-phosphate isomerase A (Neisseria gonorrhoeae (strain ATCC 700825 / FA 1090)).